Here is a 264-residue protein sequence, read N- to C-terminus: uncharacterized protein (264 aa).

An ATP-binding site is contributed by 8 to 15; sequence IQGGTGKT.

This is an uncharacterized protein from Methanocaldococcus jannaschii (strain ATCC 43067 / DSM 2661 / JAL-1 / JCM 10045 / NBRC 100440) (Methanococcus jannaschii).